The primary structure comprises 204 residues: Thymidylate kinase (204 aa).

The protein belongs to the thymidylate kinase family. In terms of assembly, homodimer; the dimer arrangement is orthogonal and not antiparallel as in human enzyme.

The catalysed reaction is dTMP + ATP = dTDP + ADP. It functions in the pathway pyrimidine metabolism; dTTP biosynthesis. Poxvirus TMP kinase is able to phosphorylate dTMP, dUMP and also dGMP from any purine and pyrimidine nucleoside triphosphate. The large substrate specificity is explained by the presence of a canal connecting the edge of the dimer interface to the TMP base binding pocket, canal not found in the human homolog. The chain is Thymidylate kinase (OPG178) from Cynomys gunnisoni (Gunnison's prairie dog).